The following is a 130-amino-acid chain: Protein ApaG (130 aa).

Residues 3–127 (RAITRNIQVT…FSLDVPDVRR (125 aa)) form the ApaG domain.

The polypeptide is Protein ApaG (Xanthobacter autotrophicus (strain ATCC BAA-1158 / Py2)).